The following is a 477-amino-acid chain: V-type ATP synthase beta chain (477 aa).

This sequence belongs to the ATPase alpha/beta chains family.

In terms of biological role, produces ATP from ADP in the presence of a proton gradient across the membrane. The V-type beta chain is a regulatory subunit. In Anaeromyxobacter sp. (strain K), this protein is V-type ATP synthase beta chain.